A 225-amino-acid polypeptide reads, in one-letter code: Glutathione S-transferase U3 (225 aa).

Positions 6-86 (EGVKLIGSWA…YIDQTWTNNP (81 aa)) constitute a GST N-terminal domain. Residues 16–17 (SP), 43–44 (VK), 57–58 (KV), and 70–71 (ES) each bind glutathione. The GST C-terminal domain occupies 91–218 (SPYDKAMARF…EKHIEHMMKI (128 aa)). Thr152 bears the Phosphothreonine mark.

This sequence belongs to the GST superfamily. Tau family.

The protein resides in the cytoplasm. Its subcellular location is the cytosol. The enzyme catalyses RX + glutathione = an S-substituted glutathione + a halide anion + H(+). In terms of biological role, may be involved in the conjugation of reduced glutathione to a wide number of exogenous and endogenous hydrophobic electrophiles and have a detoxification role against certain herbicides. The chain is Glutathione S-transferase U3 (GSTU3) from Arabidopsis thaliana (Mouse-ear cress).